Consider the following 416-residue polypeptide: 4-hydroxy-3-methylbut-2-en-1-yl diphosphate synthase (flavodoxin) (416 aa).

4 residues coordinate [4Fe-4S] cluster: Cys304, Cys307, Cys350, and Glu357.

The protein belongs to the IspG family. [4Fe-4S] cluster serves as cofactor.

The catalysed reaction is (2E)-4-hydroxy-3-methylbut-2-enyl diphosphate + oxidized [flavodoxin] + H2O + 2 H(+) = 2-C-methyl-D-erythritol 2,4-cyclic diphosphate + reduced [flavodoxin]. Its pathway is isoprenoid biosynthesis; isopentenyl diphosphate biosynthesis via DXP pathway; isopentenyl diphosphate from 1-deoxy-D-xylulose 5-phosphate: step 5/6. In terms of biological role, converts 2C-methyl-D-erythritol 2,4-cyclodiphosphate (ME-2,4cPP) into 1-hydroxy-2-methyl-2-(E)-butenyl 4-diphosphate. This Rhizobium johnstonii (strain DSM 114642 / LMG 32736 / 3841) (Rhizobium leguminosarum bv. viciae) protein is 4-hydroxy-3-methylbut-2-en-1-yl diphosphate synthase (flavodoxin).